A 290-amino-acid chain; its full sequence is 4-hydroxy-tetrahydrodipicolinate synthase (290 aa).

A pyruvate-binding site is contributed by threonine 45. The Proton donor/acceptor role is filled by tyrosine 133. Lysine 161 serves as the catalytic Schiff-base intermediate with substrate. Isoleucine 203 contacts pyruvate.

Belongs to the DapA family. In terms of assembly, homotetramer; dimer of dimers.

The protein localises to the cytoplasm. It carries out the reaction L-aspartate 4-semialdehyde + pyruvate = (2S,4S)-4-hydroxy-2,3,4,5-tetrahydrodipicolinate + H2O + H(+). It functions in the pathway amino-acid biosynthesis; L-lysine biosynthesis via DAP pathway; (S)-tetrahydrodipicolinate from L-aspartate: step 3/4. Functionally, catalyzes the condensation of (S)-aspartate-beta-semialdehyde [(S)-ASA] and pyruvate to 4-hydroxy-tetrahydrodipicolinate (HTPA). The protein is 4-hydroxy-tetrahydrodipicolinate synthase of Cellvibrio japonicus (strain Ueda107) (Pseudomonas fluorescens subsp. cellulosa).